The sequence spans 257 residues: MAALNEFVSVVVSDGSRDAGLAMLLVSRPPTNALSRQVYREVIAAADELGRRDDVAAVILFGGHEIFSAGDDMPELRTLRGAEAETAARVRRDAIDAVAAIPKPTVAAITGYALGAGLTLALAADWRISGDNVKFGATEILAGLVPGGDALARLTRVAGASKAKELVFSGRFFDAEEALALGLIDEMVAPDDVYDAAAAWARRFLDGPRHALAAAKAGVDAVFELPRAERLAAEQRRYVEVFSAGQGGDAGADPHGG.

The protein belongs to the enoyl-CoA hydratase/isomerase family.

It catalyses the reaction a (3S)-3-hydroxyacyl-CoA = a (2E)-enoyl-CoA + H2O. The catalysed reaction is a 4-saturated-(3S)-3-hydroxyacyl-CoA = a (3E)-enoyl-CoA + H2O. In terms of biological role, could possibly oxidize fatty acids using specific components. This chain is Probable enoyl-CoA hydratase echA17 (echA17), found in Mycolicibacterium paratuberculosis (strain ATCC BAA-968 / K-10) (Mycobacterium paratuberculosis).